The primary structure comprises 342 residues: Sorting nexin-15 (342 aa).

Residues 1 to 130 (MSRQAKDDFL…EFFRGGEVTR (130 aa)) form the PX domain. Positions 51, 53, 87, and 96 each coordinate a 1,2-diacyl-sn-glycero-3-phospho-(1D-myo-inositol-3-phosphate). An Omega-N-methylarginine modification is found at Arg-105. Phosphoserine occurs at positions 201 and 227. The disordered stretch occupies residues 245–267 (DQEPWEPGGQEEEEDGEGGPTPA). In terms of domain architecture, MIT spans 265 to 342 (TPAYLSQATE…LRLHLSQLPP (78 aa)).

It belongs to the sorting nexin family. In terms of assembly, homodimer. Interacts with SNX1, SNX2 and SNX4. In terms of tissue distribution, widely expressed.

The protein localises to the cytoplasm. It localises to the membrane. Its subcellular location is the cytoplasmic vesicle membrane. In terms of biological role, may be involved in several stages of intracellular trafficking. Overexpression of SNX15 disrupts the normal trafficking of proteins from the plasma membrane to recycling endosomes or the TGN. This Homo sapiens (Human) protein is Sorting nexin-15 (SNX15).